The sequence spans 510 residues: ATP synthase subunit alpha (510 aa).

169 to 176 lines the ATP pocket; sequence GDRQTGKT.

This sequence belongs to the ATPase alpha/beta chains family. In terms of assembly, F-type ATPases have 2 components, CF(1) - the catalytic core - and CF(0) - the membrane proton channel. CF(1) has five subunits: alpha(3), beta(3), gamma(1), delta(1), epsilon(1). CF(0) has three main subunits: a(1), b(2) and c(9-12). The alpha and beta chains form an alternating ring which encloses part of the gamma chain. CF(1) is attached to CF(0) by a central stalk formed by the gamma and epsilon chains, while a peripheral stalk is formed by the delta and b chains.

It is found in the cell inner membrane. It carries out the reaction ATP + H2O + 4 H(+)(in) = ADP + phosphate + 5 H(+)(out). Functionally, produces ATP from ADP in the presence of a proton gradient across the membrane. The alpha chain is a regulatory subunit. The protein is ATP synthase subunit alpha of Methylobacterium radiotolerans (strain ATCC 27329 / DSM 1819 / JCM 2831 / NBRC 15690 / NCIMB 10815 / 0-1).